A 273-amino-acid polypeptide reads, in one-letter code: Tyrosinase (273 aa).

Residues H38, H54, H63, H190, H194, and H216 each contribute to the Cu cation site.

Belongs to the tyrosinase family. Cu(2+) is required as a cofactor.

It carries out the reaction 2 L-dopa + O2 = 2 L-dopaquinone + 2 H2O. The enzyme catalyses L-tyrosine + O2 = L-dopaquinone + H2O. In terms of biological role, this is a copper-containing oxidase that functions in the formation of pigments such as melanins and other polyphenolic compounds. The sequence is that of Tyrosinase (melC2) from Streptomyces antibioticus.